A 717-amino-acid polypeptide reads, in one-letter code: MSGKCPVMHGGNTSTGTSNKDWWPEGINLDILHQHDRKTNPMDPDFNYREEVKKLDVQALKNDLRQLMVDSQAWWPADWGSYVGMFARVAWHSAGSYRLADGRGGGGTGNQRFAPLNSWPDNVNTDKGRRLLWPIKKKYGNKISWADLMVLSGTIAYEVAGLKTYGFAFGREDIWHPEKDIYWGDEKEWLAPSDERYADVEKPDTMENPLAAVQMGLIYVNPEGVNGQPDPQKTAEQVRETFARMAMNDEETAALTAGGHTIGKCHGNGEAENLSAEPEAADVEYQGIGWMNTKGRGIGRDTVVSGIEGAWTKNPTQWDMGWFDMLFNHEWELKKSPAGAWQWEPVDIAEEDMPVDVEDPSIRRMPIMTDADMAMKVDPVYNEICRKFMDDPEYFSETFAKAWFKLTHRDLGPKARYIGPDVPADDLIWQDPIPAGSIAYCEEVVKQKIAESGLSIGEMVSTAWDSARTYRGSDMRGGANGARIRLAPQKTWPGNEPERLAKVLDVYERISAETGASIADVIVLGGSVGIERAAKAAGHDVHVPFLKGRGDATDEMTDAASFAPLEPLADGFRNWQKQDYVVKPEEMLLDRAQLMGLTGPEMTVLIGGMRVLGTNHGGTRHGVFTDREGQLTNDFFVNLTDMGNTWKPAGNNVYEIRDRETDAVKWTASRVDLVFGSNSLLRSYAEVYAQDDNEEKFVNDFVAAWTKVMNADRFDVA.

A disordered region spans residues 1–20; the sequence is MSGKCPVMHGGNTSTGTSNK. Positions 11 to 20 are enriched in polar residues; it reads GNTSTGTSNK. The segment at residues 91–219 is a cross-link (tryptophyl-tyrosyl-methioninium (Trp-Tyr) (with M-245)); sequence WHSAGSYRLA…LAAVQMGLIY (129 aa). His92 serves as the catalytic Proton acceptor. A cross-link (tryptophyl-tyrosyl-methioninium (Tyr-Met) (with W-91)) is located at residues 219 to 245; sequence YVNPEGVNGQPDPQKTAEQVRETFARM. Heme b is bound at residue His260.

It belongs to the peroxidase family. Peroxidase/catalase subfamily. Homodimer or homotetramer. Heme b is required as a cofactor. Post-translationally, formation of the three residue Trp-Tyr-Met cross-link is important for the catalase, but not the peroxidase activity of the enzyme.

It carries out the reaction H2O2 + AH2 = A + 2 H2O. The enzyme catalyses 2 H2O2 = O2 + 2 H2O. In terms of biological role, bifunctional enzyme with both catalase and broad-spectrum peroxidase activity. The chain is Catalase-peroxidase from Chromohalobacter salexigens (strain ATCC BAA-138 / DSM 3043 / CIP 106854 / NCIMB 13768 / 1H11).